Here is a 507-residue protein sequence, read N- to C-terminus: Aldehyde dehydrogenase 1, mitochondrial (507 aa).

Residues 1 to 21 constitute a mitochondrion transit peptide; the sequence is MLATRNLVPIIRASIKWRIKL. Residue 266 to 271 coordinates NAD(+); sequence GSTLVG. Residues Glu-289 and Cys-323 contribute to the active site.

Belongs to the aldehyde dehydrogenase family. Homotetramer.

Its subcellular location is the mitochondrion matrix. It carries out the reaction an aldehyde + NAD(+) + H2O = a carboxylate + NADH + 2 H(+). Its pathway is alcohol metabolism; ethanol degradation; acetate from ethanol: step 2/2. This Saccharomyces cerevisiae (Baker's yeast) protein is Aldehyde dehydrogenase 1, mitochondrial (ALD1).